The following is a 358-amino-acid chain: Putative myc-like protein MYCLP1 (358 aa).

Disordered regions lie at residues 150-171 (ACSRSESPSDSEGEEIDVTVKK) and 219-245 (QEGAPKRMPPKEALEREAPGGKDDKED). Over residues 227–242 (PPKEALEREAPGGKDD) the composition is skewed to basic and acidic residues. The region spanning 274-326 (WTKKKYHSYLERKRRNDQRSRFLALRDEVPALASCSRVSKVMILVKATEYLHE) is the bHLH domain.

As to quaternary structure, efficient DNA binding requires dimerization with another bHLH protein. Binds DNA as a heterodimer with MAX. In terms of tissue distribution, detected in adult testis.

It is found in the nucleus. The sequence is that of Putative myc-like protein MYCLP1 (MYCLP1) from Homo sapiens (Human).